The sequence spans 544 residues: Probable protein kinase UbiB (544 aa).

The Protein kinase domain occupies 123–500 (DFDEKALASA…RNKQRKSQYL (378 aa)). ATP is bound by residues 129 to 137 (LASASIAQV) and Lys152. Asp286 serves as the catalytic Proton acceptor. 2 helical membrane passes run 499–519 (YLLGIGATLILCGSLFFISAS) and 522–542 (MAIAFMSAGALSWIIGWYKSG).

It belongs to the ABC1 family. UbiB subfamily.

The protein resides in the cell inner membrane. It functions in the pathway cofactor biosynthesis; ubiquinone biosynthesis [regulation]. In terms of biological role, is probably a protein kinase regulator of UbiI activity which is involved in aerobic coenzyme Q (ubiquinone) biosynthesis. Required for the expression of 2'-N-acetyltransferase. The polypeptide is Probable protein kinase UbiB (Providencia stuartii).